Reading from the N-terminus, the 122-residue chain is Large ribosomal subunit protein uL14 (122 aa).

It belongs to the universal ribosomal protein uL14 family. Part of the 50S ribosomal subunit. Forms a cluster with proteins L3 and L19. In the 70S ribosome, L14 and L19 interact and together make contacts with the 16S rRNA in bridges B5 and B8.

Binds to 23S rRNA. Forms part of two intersubunit bridges in the 70S ribosome. This chain is Large ribosomal subunit protein uL14, found in Rubrobacter xylanophilus (strain DSM 9941 / JCM 11954 / NBRC 16129 / PRD-1).